Reading from the N-terminus, the 466-residue chain is Vimentin (466 aa).

Residues 1-13 (MSTRSVSSSSYRR) are compositionally biased toward low complexity. The interval 1-32 (MSTRSVSSSSYRRMFGGPGTGSRPSSTRSYVT) is disordered. At S2 the chain carries N-acetylserine. Residues 2 to 95 (STRSVSSSSY…FSLADAINTE (94 aa)) form a head region. 5 positions are modified to phosphoserine: S5, S7, S8, S9, and S10. A glycan (O-linked (GlcNAc) serine; alternate) is linked at S7. The residue at position 20 (T20) is a Phosphothreonine. Positions 21–32 (GSRPSSTRSYVT) are enriched in low complexity. Residues S25 and S26 each carry the phosphoserine modification. O-linked (GlcNAc) threonine glycosylation occurs at T33. A phosphoserine mark is found at S34, S39, S42, S47, S49, and S51. The O-linked (GlcNAc) serine; alternate glycan is linked to S34. Residue Y53 is modified to Phosphotyrosine. A phosphoserine mark is found at S55 and S56. The residue at position 61 (Y61) is a Phosphotyrosine. 5 positions are modified to phosphoserine: S66, S72, S73, S83, and S87. The tract at residues 96-131 (FKNTRTNEKVELQELNDRFANYIDKVRFLEQQNKIL) is coil 1A. Residues 96–131 (FKNTRTNEKVELQELNDRFANYIDKVRFLEQQNKIL) adopt a coiled-coil conformation. One can recognise an IF rod domain in the interval 103–411 (EKVELQELND…KLLEGEESRI (309 aa)). A Glycyl lysine isopeptide (Lys-Gly) (interchain with G-Cter in SUMO2) cross-link involves residue K104. The residue at position 117 (Y117) is a Phosphotyrosine. N6-acetyllysine; alternate is present on residues K120, K129, and K139. Residues K120 and K129 each carry the N6-succinyllysine; alternate modification. Residues K120, K129, and K139 each participate in a glycyl lysine isopeptide (Lys-Gly) (interchain with G-Cter in SUMO2); alternate cross-link. The tract at residues 132–153 (LAELEQLKGQGKSRLGDLYEEE) is linker 1. A Phosphoserine modification is found at S144. Residues 154–245 (MRELRRQVDQ…KLHDEEIQEL (92 aa)) are a coiled coil. The coil 1B stretch occupies residues 154–245 (MRELRRQVDQ…KLHDEEIQEL (92 aa)). An N6-acetyllysine modification is found at K168. N6-acetyllysine; alternate is present on K188. The residue at position 188 (K188) is an N6-succinyllysine; alternate. Residue S214 is modified to Phosphoserine. K223 is modified (N6-acetyllysine; alternate). K223 participates in a covalent cross-link: Glycyl lysine isopeptide (Lys-Gly) (interchain with G-Cter in SUMO2); alternate. S226 bears the Phosphoserine mark. K235 carries the N6-acetyllysine modification. The segment at 246-268 (QAQIQDQHVQIDMDVSKPDLTAA) is linker 12. A Glycyl lysine isopeptide (Lys-Gly) (interchain with G-Cter in SUMO2) cross-link involves residue K262. The coil 2 stretch occupies residues 269–407 (LRDVRQQYES…ATYRKLLEGE (139 aa)). The residue at position 294 (K294) is an N6-acetyllysine; alternate. Residue K294 is modified to N6-succinyllysine; alternate. K294 participates in a covalent cross-link: Glycyl lysine isopeptide (Lys-Gly) (interchain with G-Cter in SUMO2); alternate. The residue at position 299 (S299) is a Phosphoserine. Residues 303–407 (NRNNDALRQA…ATYRKLLEGE (105 aa)) are a coiled coil. A Glycyl lysine isopeptide (Lys-Gly) (interchain with G-Cter in SUMO2) cross-link involves residue K313. S325 is subject to Phosphoserine. The short motif at 326 to 329 (LTCE) is the [IL]-x-C-x-x-[DE] motif element. K373 carries the post-translational modification N6-acetyllysine; alternate. A Glycyl lysine isopeptide (Lys-Gly) (interchain with G-Cter in SUMO2); alternate cross-link involves residue K373. Residues 408–466 (ESRIALPLPNFSSLNLRETNLDSLPLVDTHSKRTLLIKTVETRDGQVINETSQHHDDLE) are tail. Phosphoserine occurs at positions 409, 419, and 420. T426 is subject to Phosphothreonine. Position 430 is a phosphoserine (S430). Residue T436 is modified to Phosphothreonine. The residue at position 438 (S438) is a Phosphoserine. Residue K439 forms a Glycyl lysine isopeptide (Lys-Gly) (interchain with G-Cter in SUMO2) linkage. N6-acetyllysine; alternate is present on K445. Position 445 is an N6-succinyllysine; alternate (K445). Residue K445 forms a Glycyl lysine isopeptide (Lys-Gly) (interchain with G-Cter in SUMO2); alternate linkage. K445 participates in a covalent cross-link: Glycyl lysine isopeptide (Lys-Gly) (interchain with G-Cter in SUMO1); alternate. 2 positions are modified to phosphothreonine: T446 and T458. S459 carries the post-translational modification Phosphoserine.

Belongs to the intermediate filament family. Homomer assembled from elementary dimers. Identified in complexes that contain VIM, EZR, AHNAK, BFSP1, BFSP2, ANK2, PLEC, PRX and spectrin. Interacts with BCAS3. Interacts with LGSN. Interacts with SYNM. Interacts (via rod region) with PLEC (via CH 1 domain). Interacts with STK33. Interacts with LARP6. Interacts with RAB8B. Interacts with TOR1A; the interaction associates TOR1A with the cytoskeleton. Interacts with TOR1AIP1. Interacts with TOR1AIP1. Interacts with DIAPH1. Interacts with EPPK1; interaction is dependent of higher-order structure of intermediate filament. Interacts with the non-receptor tyrosine kinase SRMS; the interaction leads to phosphorylation of VIM. Interacts with NOD2. Interacts (via head region) with CORO1C. Interacts with HDGF. Interacts with PRKCE (via phorbol-ester/DAG-type 2 domain). Interacts with BFSP2. Interacts with PPL. Interacts with PKP1 and PKP2. Interacts with SCRIB (via PDZ domains); the interaction protects SCRIB from proteasomal degradation and facilitates SCRIB localization to intermediate filaments, the interaction is reduced by cell contact inhibition. Filament disassembly during mitosis is promoted by phosphorylation at Ser-55 as well as by nestin. One of the most prominent phosphoproteins in various cells of mesenchymal origin. Phosphorylation is enhanced during cell division, at which time vimentin filaments are significantly reorganized. Phosphorylation by PKN1 inhibits the formation of filaments. Phosphorylated at Ser-56 by CDK5 during neutrophil secretion in the cytoplasm. Phosphorylated by STK33. Phosphorylated on tyrosine residues by SRMS. Post-translationally, O-glycosylated during cytokinesis at sites identical or close to phosphorylation sites, this interferes with the phosphorylation status. In terms of processing, S-nitrosylation is induced by interferon-gamma and oxidatively-modified low-densitity lipoprotein (LDL(ox)) possibly implicating the iNOS-S100A8/9 transnitrosylase complex.

The protein resides in the cytoplasm. It localises to the cytoskeleton. It is found in the nucleus matrix. The protein localises to the cell membrane. Functionally, vimentins are class-III intermediate filaments found in various non-epithelial cells, especially mesenchymal cells. Vimentin is attached to the nucleus, endoplasmic reticulum, and mitochondria, either laterally or terminally. Plays a role in cell directional movement, orientation, cell sheet organization and Golgi complex polarization at the cell migration front. Protects SCRIB from proteasomal degradation and facilitates its localization to intermediate filaments in a cell contact-mediated manner. Involved with LARP6 in the stabilization of type I collagen mRNAs for CO1A1 and CO1A2. This Canis lupus familiaris (Dog) protein is Vimentin (VIM).